The sequence spans 116 residues: Flagellar transcriptional regulator FlhD (116 aa).

The protein belongs to the FlhD family. As to quaternary structure, homodimer; disulfide-linked. Forms a heterohexamer composed of two FlhC and four FlhD subunits. Each FlhC binds a FlhD dimer, forming a heterotrimer, and a hexamer assembles by dimerization of two heterotrimers.

The protein localises to the cytoplasm. In terms of biological role, functions in complex with FlhC as a master transcriptional regulator that regulates transcription of several flagellar and non-flagellar operons by binding to their promoter region. Activates expression of class 2 flagellar genes, including fliA, which is a flagellum-specific sigma factor that turns on the class 3 genes. Also regulates genes whose products function in a variety of physiological pathways. This Xenorhabdus nematophila (Achromobacter nematophilus) protein is Flagellar transcriptional regulator FlhD.